Here is a 92-residue protein sequence, read N- to C-terminus: Acylphosphatase (92 aa).

One can recognise an Acylphosphatase-like domain in the interval 4-92; the sequence is AVQLDVFGRV…SACHKFSVVG (89 aa). Residues Arg-19 and Asn-37 contribute to the active site.

Belongs to the acylphosphatase family.

It catalyses the reaction an acyl phosphate + H2O = a carboxylate + phosphate + H(+). In Latilactobacillus sakei subsp. sakei (strain 23K) (Lactobacillus sakei subsp. sakei), this protein is Acylphosphatase (acyP).